The chain runs to 316 residues: Aspartate-semialdehyde dehydrogenase (316 aa).

NADP(+) is bound by residues 13-16 and 41-42; these read TGAV and RS. Arg101 is a phosphate binding site. Catalysis depends on Cys132, which acts as the Acyl-thioester intermediate. Residue Gln159 coordinates substrate. Position 162–163 (162–163) interacts with NADP(+); sequence SG. Residue Lys216 participates in phosphate binding. Arg238 contacts substrate. His245 serves as the catalytic Proton acceptor. Asn316 contacts NADP(+).

This sequence belongs to the aspartate-semialdehyde dehydrogenase family. In terms of assembly, homodimer.

It carries out the reaction L-aspartate 4-semialdehyde + phosphate + NADP(+) = 4-phospho-L-aspartate + NADPH + H(+). The protein operates within amino-acid biosynthesis; L-lysine biosynthesis via DAP pathway; (S)-tetrahydrodipicolinate from L-aspartate: step 2/4. It participates in amino-acid biosynthesis; L-methionine biosynthesis via de novo pathway; L-homoserine from L-aspartate: step 2/3. It functions in the pathway amino-acid biosynthesis; L-threonine biosynthesis; L-threonine from L-aspartate: step 2/5. In terms of biological role, catalyzes the NADPH-dependent formation of L-aspartate-semialdehyde (L-ASA) by the reductive dephosphorylation of L-aspartyl-4-phosphate. The protein is Aspartate-semialdehyde dehydrogenase (asd) of Vibrio mimicus.